Here is a 169-residue protein sequence, read N- to C-terminus: Peptide deformylase (169 aa).

Residues Cys-91 and His-133 each coordinate Fe cation. Glu-134 is a catalytic residue. Residue His-137 coordinates Fe cation.

The protein belongs to the polypeptide deformylase family. Requires Fe(2+) as cofactor.

It catalyses the reaction N-terminal N-formyl-L-methionyl-[peptide] + H2O = N-terminal L-methionyl-[peptide] + formate. Functionally, removes the formyl group from the N-terminal Met of newly synthesized proteins. Requires at least a dipeptide for an efficient rate of reaction. N-terminal L-methionine is a prerequisite for activity but the enzyme has broad specificity at other positions. The chain is Peptide deformylase from Citrobacter koseri (strain ATCC BAA-895 / CDC 4225-83 / SGSC4696).